Reading from the N-terminus, the 147-residue chain is MEVILKEDIKGLGYKNDLVQVKAGYGNNFLIPRGYAINATVSAKKVVAENIKQAAHKAEKLKKDAVATSEKIAGLALEIAAKVGDTGKIFGAVTSLQISDALAKKGISVDRKKIAFKGDVKDAGEHTALIDLHKEVKVELKFTVVAE.

It belongs to the bacterial ribosomal protein bL9 family.

Binds to the 23S rRNA. The chain is Large ribosomal subunit protein bL9 from Cytophaga hutchinsonii (strain ATCC 33406 / DSM 1761 / CIP 103989 / NBRC 15051 / NCIMB 9469 / D465).